Here is a 127-residue protein sequence, read N- to C-terminus: uncharacterized protein (127 aa).

This is an uncharacterized protein from Bacillus subtilis (strain 168).